The chain runs to 170 residues: Photosystem II extrinsic protein V (170 aa).

The first 33 residues, 1-33 (MVSVFSSLRQSFKGLLVLVPVLIGLAFISPAEA), serve as a signal peptide directing secretion. Positions 70, 73, 74, and 137 each coordinate heme c.

It belongs to the cytochrome c family. PsbV subfamily. PSII is composed of 1 copy each of membrane proteins PsbA, PsbB, PsbC, PsbD, PsbE, PsbF, PsbH, PsbI, PsbJ, PsbK, PsbL, PsbM, PsbT, PsbX, PsbY, PsbZ, Psb30/Ycf12, peripheral proteins PsbO, CyanoQ (PsbQ), PsbU, PsbV and a large number of cofactors. It forms dimeric complexes. The cofactor is heme c.

It localises to the cellular thylakoid membrane. One of the extrinsic, lumenal subunits of photosystem II (PSII). PSII is a light-driven water plastoquinone oxidoreductase, using light energy to abstract electrons from H(2)O, generating a proton gradient subsequently used for ATP formation. The extrinsic proteins stabilize the structure of photosystem II oxygen-evolving complex (OEC), the ion environment of oxygen evolution and protect the OEC against heat-induced inactivation. Low-potential cytochrome c that plays a role in the OEC of PSII. This is Photosystem II extrinsic protein V from Synechococcus sp. (strain CC9902).